The following is a 569-amino-acid chain: Urease subunit beta (569 aa).

The Urease domain maps to 131 to 569; the sequence is GGIDTHIHFI…LSLAQLYNLF (439 aa). His136, His138, and Lys219 together coordinate Ni(2+). Position 219 is an N6-carboxylysine (Lys219). A substrate-binding site is contributed by His221. Positions 248 and 274 each coordinate Ni(2+). Catalysis depends on His322, which acts as the Proton donor. Asp362 is a binding site for Ni(2+).

The protein belongs to the metallo-dependent hydrolases superfamily. Urease alpha subunit family. As to quaternary structure, heterohexamer of 3 UreA (alpha) and 3 UreB (beta) subunits. It depends on Ni cation as a cofactor. In terms of processing, carboxylation allows a single lysine to coordinate two nickel ions.

The protein localises to the cytoplasm. It catalyses the reaction urea + 2 H2O + H(+) = hydrogencarbonate + 2 NH4(+). Its pathway is nitrogen metabolism; urea degradation; CO(2) and NH(3) from urea (urease route): step 1/1. This chain is Urease subunit beta, found in Helicobacter felis (strain ATCC 49179 / CCUG 28539 / NCTC 12436 / CS1).